We begin with the raw amino-acid sequence, 250 residues long: Pyrroloquinoline-quinone synthase (250 aa).

This sequence belongs to the PqqC family.

It catalyses the reaction 6-(2-amino-2-carboxyethyl)-7,8-dioxo-1,2,3,4,7,8-hexahydroquinoline-2,4-dicarboxylate + 3 O2 = pyrroloquinoline quinone + 2 H2O2 + 2 H2O + H(+). The protein operates within cofactor biosynthesis; pyrroloquinoline quinone biosynthesis. Ring cyclization and eight-electron oxidation of 3a-(2-amino-2-carboxyethyl)-4,5-dioxo-4,5,6,7,8,9-hexahydroquinoline-7,9-dicarboxylic-acid to PQQ. In Ectopseudomonas mendocina (strain ymp) (Pseudomonas mendocina), this protein is Pyrroloquinoline-quinone synthase.